Here is a 350-residue protein sequence, read N- to C-terminus: D-guloside 3-dehydrogenase (350 aa).

This sequence belongs to the zinc-containing alcohol dehydrogenase family. Zn(2+) serves as cofactor.

It carries out the reaction a D-guloside + NAD(+) = a 3-dehydro-D-guloside + NADH + H(+). In terms of biological role, catalyzes the NAD(+)-dependent oxidation of the hydroxyl group at C3 of D-gulosides leading to 3-dehydro-D-gulosides. Probably functions in a metabolic pathway that transforms D-gulosides to D-glucosides. Is also able to catalyze the reverse reactions, i.e. the NADH-dependent reduction of the oxo group at C3 of 3-dehydro-D-gulosides leading to D-gulosides. In vitro, can oxidize D-gulose and methyl beta-D-guloside, and reduce methyl alpha-3-dehydro-D-guloside and methyl beta-3-dehydro-D-guloside. However, the actual specific physiological substrates for this metabolic pathway are unknown. The protein is D-guloside 3-dehydrogenase (ycjQ) of Shigella flexneri.